The following is a 223-amino-acid chain: Small ribosomal subunit protein uS3 (223 aa).

The 69-residue stretch at 39-107 (VREFLHKKLA…PVQINIEEVR (69 aa)) folds into the KH type-2 domain.

It belongs to the universal ribosomal protein uS3 family. As to quaternary structure, part of the 30S ribosomal subunit. Forms a tight complex with proteins S10 and S14.

Binds the lower part of the 30S subunit head. Binds mRNA in the 70S ribosome, positioning it for translation. The protein is Small ribosomal subunit protein uS3 of Francisella tularensis subsp. novicida (strain U112).